Reading from the N-terminus, the 577-residue chain is Probable ATP-dependent RNA helicase DDX55 homolog (577 aa).

The Q motif motif lies at 7-37 (AVATKTYREKLGPEILEVFDKSYKSFTDVQV). Residues 40 to 218 (GTHLLNLSDV…VFGLRNAKQV (179 aa)) enclose the Helicase ATP-binding domain. 53-60 (SPTGSGKT) contributes to the ATP binding site. The DEAD box signature appears at 166–169 (DEAD). The 163-residue stretch at 231–393 (TLKNYFVECP…EVKVPTSTSR (163 aa)) folds into the Helicase C-terminal domain. The disordered stretch occupies residues 508–577 (AKEKKRREKE…LSKKEIKDVL (70 aa)). Positions 510–530 (EKKRREKEARKMKRAGGRFKS) are enriched in basic residues.

This sequence belongs to the DEAD box helicase family. DDX55/SPB4 subfamily.

The catalysed reaction is ATP + H2O = ADP + phosphate + H(+). In terms of biological role, probable ATP-binding RNA helicase. In Caenorhabditis briggsae, this protein is Probable ATP-dependent RNA helicase DDX55 homolog.